A 209-amino-acid polypeptide reads, in one-letter code: Uracil phosphoribosyltransferase (209 aa).

5-phospho-alpha-D-ribose 1-diphosphate is bound by residues arginine 79, arginine 104, and 131–139 (DPMLATGNS). Uracil contacts are provided by residues isoleucine 194 and 199–201 (GDA). Aspartate 200 contributes to the 5-phospho-alpha-D-ribose 1-diphosphate binding site.

This sequence belongs to the UPRTase family. The cofactor is Mg(2+).

The catalysed reaction is UMP + diphosphate = 5-phospho-alpha-D-ribose 1-diphosphate + uracil. It functions in the pathway pyrimidine metabolism; UMP biosynthesis via salvage pathway; UMP from uracil: step 1/1. With respect to regulation, allosterically activated by GTP. Its function is as follows. Catalyzes the conversion of uracil and 5-phospho-alpha-D-ribose 1-diphosphate (PRPP) to UMP and diphosphate. The protein is Uracil phosphoribosyltransferase of Sinorhizobium fredii (strain NBRC 101917 / NGR234).